The sequence spans 350 residues: Phosphoribosylformylglycinamidine cyclo-ligase (350 aa).

It belongs to the AIR synthase family.

The protein resides in the cytoplasm. It catalyses the reaction 2-formamido-N(1)-(5-O-phospho-beta-D-ribosyl)acetamidine + ATP = 5-amino-1-(5-phospho-beta-D-ribosyl)imidazole + ADP + phosphate + H(+). It participates in purine metabolism; IMP biosynthesis via de novo pathway; 5-amino-1-(5-phospho-D-ribosyl)imidazole from N(2)-formyl-N(1)-(5-phospho-D-ribosyl)glycinamide: step 2/2. The sequence is that of Phosphoribosylformylglycinamidine cyclo-ligase from Nitratidesulfovibrio vulgaris (strain DSM 19637 / Miyazaki F) (Desulfovibrio vulgaris).